Consider the following 534-residue polypeptide: Zinc finger protein 397 (534 aa).

Phosphoserine is present on Ser-31. Residues 50–132 form the SCAN box domain; the sequence is RQQFRKFCYQ…TLLEDLEREF (83 aa). Residues Lys-55, Lys-171, Lys-202, and Lys-252 each participate in a glycyl lysine isopeptide (Lys-Gly) (interchain with G-Cter in SUMO2) cross-link. The interval 197-242 is disordered; that stretch reads DISGEKSQRLSQEPSFGGFSEHKSSLEWQQGSAPGETLRRSPSQRA. 9 consecutive C2H2-type zinc fingers follow at residues 285 to 307, 313 to 335, 341 to 363, 369 to 391, 397 to 419, 425 to 447, 453 to 475, 481 to 503, and 509 to 531; these read YRCD…QRIH, YKCN…QRIH, YECS…RKIH, CKCN…QRIH, YECN…QRIH, YQCN…QRIH, and YICS…QRVH.

It belongs to the krueppel C2H2-type zinc-finger protein family.

Its subcellular location is the nucleus. Its function is as follows. DNA-dependent transcriptional repressor. The sequence is that of Zinc finger protein 397 (ZNF397) from Bos taurus (Bovine).